We begin with the raw amino-acid sequence, 236 residues long: Chaperone protein TorD (236 aa).

This sequence belongs to the TorD/DmsD family. TorD subfamily.

It is found in the cytoplasm. Involved in the biogenesis of TorA. Acts on TorA before the insertion of the molybdenum cofactor and, as a result, probably favors a conformation of the apoenzyme that is competent for acquiring the cofactor. This chain is Chaperone protein TorD, found in Colwellia psychrerythraea (strain 34H / ATCC BAA-681) (Vibrio psychroerythus).